Reading from the N-terminus, the 288-residue chain is Protease HtpX (288 aa).

The next 2 helical transmembrane spans lie at 5-25 (IALF…VMSL) and 35-55 (GLLV…LLLS). His-140 provides a ligand contact to Zn(2+). Glu-141 is a catalytic residue. His-144 is a Zn(2+) binding site. A run of 2 helical transmembrane segments spans residues 155 to 175 (LLQG…GGII) and 194 to 214 (IIVF…SMWF). Glu-219 is a Zn(2+) binding site.

It belongs to the peptidase M48B family. Zn(2+) is required as a cofactor.

It is found in the cell inner membrane. This is Protease HtpX from Stenotrophomonas maltophilia (strain K279a).